Here is a 216-residue protein sequence, read N- to C-terminus: Thymidylate kinase (216 aa).

ATP is bound at residue Gly-9–Thr-16.

It belongs to the thymidylate kinase family.

The catalysed reaction is dTMP + ATP = dTDP + ADP. Phosphorylation of dTMP to form dTDP in both de novo and salvage pathways of dTTP synthesis. In Syntrophotalea carbinolica (strain DSM 2380 / NBRC 103641 / GraBd1) (Pelobacter carbinolicus), this protein is Thymidylate kinase.